The sequence spans 507 residues: Arabinose import ATP-binding protein AraG (507 aa).

ABC transporter domains are found at residues 14–249 and 249–505; these read LRFN…MVGR and RDIQ…LPRT. Residue 46 to 53 participates in ATP binding; that stretch reads GENGAGKS.

This sequence belongs to the ABC transporter superfamily. Arabinose importer (TC 3.A.1.2.2) family. The complex is composed of two ATP-binding proteins (AraG), two transmembrane proteins (AraH) and a solute-binding protein (AraF).

Its subcellular location is the cell inner membrane. It catalyses the reaction L-arabinose(out) + ATP + H2O = L-arabinose(in) + ADP + phosphate + H(+). Its function is as follows. Part of the ABC transporter complex AraFGH involved in arabinose import. Responsible for energy coupling to the transport system. This Pseudomonas syringae pv. tomato (strain ATCC BAA-871 / DC3000) protein is Arabinose import ATP-binding protein AraG.